The sequence spans 210 residues: Redox-sensing transcriptional repressor Rex (210 aa).

Positions 17 to 56 (KYHRYLYELLKNDVDRISSKELSEKIGFTASQIRQDLNCF) form a DNA-binding region, H-T-H motif. 91-96 (GAGNIG) provides a ligand contact to NAD(+).

It belongs to the transcriptional regulatory Rex family. In terms of assembly, homodimer.

It localises to the cytoplasm. In terms of biological role, modulates transcription in response to changes in cellular NADH/NAD(+) redox state. In Clostridium botulinum (strain Loch Maree / Type A3), this protein is Redox-sensing transcriptional repressor Rex.